The sequence spans 301 residues: MSTDKTYCGFIAIVGRPNVGKSTLLNKLLGQKISITSRKAQTTRHRIVGIHTEGPYQAIYVDTPGLHMEEKRAINRLMNKAASSSIGDVELVIFVVEGTRWTPDDEMVLNKLRDGKAPVILAVNKVDNVQEKADLLPHLQFLASQMNFLDIVPISAETGMNVDTIAGIVRKHLPEAIHHFPEDYITDRSQRFMASEIIREKLMRFLGAELPYSVTVEIERFVTNERGGYDINGLILVEREGQKKMVIGNKGAKIKTIGIEARKDMQEMFEAPVHLELWVKVKSGWADDERALRSLGYVDDL.

The region spanning 7-175 (YCGFIAIVGR…AGIVRKHLPE (169 aa)) is the Era-type G domain. The tract at residues 15 to 22 (GRPNVGKS) is G1. 15 to 22 (GRPNVGKS) lines the GTP pocket. Positions 41–45 (QTTRH) are G2. Positions 62–65 (DTPG) are G3. GTP contacts are provided by residues 62-66 (DTPGL) and 124-127 (NKVD). Positions 124-127 (NKVD) are G4. Residues 154 to 156 (ISA) are G5. Residues 206 to 283 (LGAELPYSVT…HLELWVKVKS (78 aa)) enclose the KH type-2 domain.

It belongs to the TRAFAC class TrmE-Era-EngA-EngB-Septin-like GTPase superfamily. Era GTPase family. As to quaternary structure, monomer.

Its subcellular location is the cytoplasm. It localises to the cell inner membrane. An essential GTPase that binds both GDP and GTP, with rapid nucleotide exchange. Plays a role in 16S rRNA processing and 30S ribosomal subunit biogenesis and possibly also in cell cycle regulation and energy metabolism. The sequence is that of GTPase Era from Salmonella agona (strain SL483).